The primary structure comprises 88 residues: Beta-insect excitatory toxin BmKIT1 (88 aa).

A signal peptide spans 1–18 (MKFFLIFLVIFPIMGVLG). One can recognise an LCN-type CS-alpha/beta domain in the interval 20-83 (KNGYAVDSSG…IKDATKSYCD (64 aa)). Disulfide bonds link Cys34–Cys55, Cys40–Cys60, Cys44–Cys62, and Cys56–Cys82. Ile87 is subject to Isoleucine amide.

The protein belongs to the long (4 C-C) scorpion toxin superfamily. Sodium channel inhibitor family. Beta subfamily. As to expression, expressed by the venom gland.

Its subcellular location is the secreted. Excitatory insect beta-toxins induce a spastic paralysis. They bind voltage-independently at site-4 of sodium channels (Nav) and shift the voltage of activation toward more negative potentials thereby affecting sodium channel activation and promoting spontaneous and repetitive firing. This toxin is active only on insects. The sequence is that of Beta-insect excitatory toxin BmKIT1 from Olivierus martensii (Manchurian scorpion).